We begin with the raw amino-acid sequence, 822 residues long: Phenylalanine--tRNA ligase beta subunit (822 aa).

In terms of domain architecture, tRNA-binding spans 44–162 (LSKNTNLVVG…DQIALGSNAL (119 aa)). The disordered stretch occupies residues 201–224 (QSSNNNQETKSTNYKTKNSEDQTN). The 84-residue stretch at 430 to 513 (RTNPTISLNL…RLYGCHKLPP (84 aa)) folds into the B5 domain. The Mg(2+) site is built by D491, D497, and D501. The FDX-ACB domain maps to 730–822 (PKFPTVIRDL…LIKHFHIEIR (93 aa)).

Belongs to the phenylalanyl-tRNA synthetase beta subunit family. Type 1 subfamily. Tetramer of two alpha and two beta subunits. Mg(2+) is required as a cofactor.

Its subcellular location is the cytoplasm. The catalysed reaction is tRNA(Phe) + L-phenylalanine + ATP = L-phenylalanyl-tRNA(Phe) + AMP + diphosphate + H(+). This chain is Phenylalanine--tRNA ligase beta subunit, found in Onion yellows phytoplasma (strain OY-M).